Reading from the N-terminus, the 347-residue chain is D-alanine--D-alanine ligase (347 aa).

Positions 134 to 332 constitute an ATP-grasp domain; sequence KLYAKDLGVK…LAQSLPKTPK (199 aa). Residue 161–216 coordinates ATP; the sequence is LIGFNFPFIVKPSNAGSSLGVNVVKEEKELIYALDSAFEYSKEVLIEPFIQGVKEY. The Mg(2+) site is built by aspartate 288, glutamate 300, and asparagine 302.

Belongs to the D-alanine--D-alanine ligase family. Mg(2+) serves as cofactor. The cofactor is Mn(2+).

The protein resides in the cytoplasm. The enzyme catalyses 2 D-alanine + ATP = D-alanyl-D-alanine + ADP + phosphate + H(+). It participates in cell wall biogenesis; peptidoglycan biosynthesis. Functionally, cell wall formation. This Helicobacter pylori (strain J99 / ATCC 700824) (Campylobacter pylori J99) protein is D-alanine--D-alanine ligase.